The chain runs to 390 residues: 1-deoxy-D-xylulose 5-phosphate reductoisomerase (390 aa).

NADPH-binding residues include Thr10, Gly11, Ser12, Ile13, Gly36, Asn38, and Asn124. Position 125 (Lys125) interacts with 1-deoxy-D-xylulose 5-phosphate. Position 126 (Glu126) interacts with NADPH. Asp150 contributes to the Mn(2+) binding site. Ser151, Glu152, Ser176, and His199 together coordinate 1-deoxy-D-xylulose 5-phosphate. Glu152 is a Mn(2+) binding site. Position 205 (Gly205) interacts with NADPH. The 1-deoxy-D-xylulose 5-phosphate site is built by Ser212, Asn217, Lys218, and Glu221. Glu221 is a binding site for Mn(2+).

It belongs to the DXR family. Mg(2+) serves as cofactor. Mn(2+) is required as a cofactor.

It carries out the reaction 2-C-methyl-D-erythritol 4-phosphate + NADP(+) = 1-deoxy-D-xylulose 5-phosphate + NADPH + H(+). The protein operates within isoprenoid biosynthesis; isopentenyl diphosphate biosynthesis via DXP pathway; isopentenyl diphosphate from 1-deoxy-D-xylulose 5-phosphate: step 1/6. Functionally, catalyzes the NADPH-dependent rearrangement and reduction of 1-deoxy-D-xylulose-5-phosphate (DXP) to 2-C-methyl-D-erythritol 4-phosphate (MEP). The chain is 1-deoxy-D-xylulose 5-phosphate reductoisomerase from Microcystis aeruginosa (strain NIES-843 / IAM M-2473).